The primary structure comprises 326 residues: uncharacterized protein (326 aa).

This sequence belongs to the ParB family.

This is an uncharacterized protein from Acidianus two-tailed virus (ATV).